The primary structure comprises 398 residues: Keratinocyte differentiation factor 1 (398 aa).

Disordered regions lie at residues 1 to 60 and 123 to 156; these read MPRP…SITF and AEAN…STMG. Basic and acidic residues predominate over residues 44–55; that stretch reads RPDPKDPGHHGP. S218 is modified (phosphoserine). Disordered stretches follow at residues 307 to 340 and 369 to 392; these read RKSR…TMVG and GAPG…SGAP. Over residues 377-389 the composition is skewed to polar residues; it reads HDSSFQGTDTDSS.

The protein resides in the cytoplasm. It is found in the cell junction. Its function is as follows. Plays a role in the regulation of the epidermis formation during early development. Required both as an inhibitor of basal cell proliferation and a promoter of differentiation of basal progenitor cell progeny. This Homo sapiens (Human) protein is Keratinocyte differentiation factor 1 (KDF1).